The primary structure comprises 646 residues: UvrABC system protein B (646 aa).

A Helicase ATP-binding domain is found at 29-411 (LEKNPEKSKQ…SNQVVEQIIR (383 aa)). Position 42-49 (42-49 (GVTGSGKT)) interacts with ATP. Residues 95 to 118 (YYDYYQPESYIPQKDQYIEKDAQI) carry the Beta-hairpin motif. The Helicase C-terminal domain occupies 428–590 (QVEDIIKETE…ITPQTIVKPI (163 aa)). The region spanning 609 to 644 (PNVIVELEAEMYEAAEALEFEKAIKIRDTIAKLKKK) is the UVR domain.

The protein belongs to the UvrB family. As to quaternary structure, forms a heterotetramer with UvrA during the search for lesions. Interacts with UvrC in an incision complex.

The protein resides in the cytoplasm. The UvrABC repair system catalyzes the recognition and processing of DNA lesions. A damage recognition complex composed of 2 UvrA and 2 UvrB subunits scans DNA for abnormalities. Upon binding of the UvrA(2)B(2) complex to a putative damaged site, the DNA wraps around one UvrB monomer. DNA wrap is dependent on ATP binding by UvrB and probably causes local melting of the DNA helix, facilitating insertion of UvrB beta-hairpin between the DNA strands. Then UvrB probes one DNA strand for the presence of a lesion. If a lesion is found the UvrA subunits dissociate and the UvrB-DNA preincision complex is formed. This complex is subsequently bound by UvrC and the second UvrB is released. If no lesion is found, the DNA wraps around the other UvrB subunit that will check the other stand for damage. The sequence is that of UvrABC system protein B from Methanococcus maripaludis (strain DSM 14266 / JCM 13030 / NBRC 101832 / S2 / LL).